A 653-amino-acid chain; its full sequence is Chaperone protein dnaK3 (653 aa).

T197 carries the phosphothreonine; by autocatalysis modification.

It belongs to the heat shock protein 70 family.

Functionally, acts as a chaperone. The protein is Chaperone protein dnaK3 (dnaK3) of Nostoc sp. (strain PCC 7120 / SAG 25.82 / UTEX 2576).